The following is a 98-amino-acid chain: NADH-ubiquinone oxidoreductase chain 4L (98 aa).

The next 3 helical transmembrane spans lie at 1–21 (MSLVYMNIMTAFAVSLTGLLM), 29–49 (SLLCLEGMMLSLFIMATLMIL), and 61–81 (IILLVFAACEAALGLSLLVMV).

This sequence belongs to the complex I subunit 4L family. As to quaternary structure, core subunit of respiratory chain NADH dehydrogenase (Complex I) which is composed of 45 different subunits.

The protein localises to the mitochondrion inner membrane. The enzyme catalyses a ubiquinone + NADH + 5 H(+)(in) = a ubiquinol + NAD(+) + 4 H(+)(out). In terms of biological role, core subunit of the mitochondrial membrane respiratory chain NADH dehydrogenase (Complex I) which catalyzes electron transfer from NADH through the respiratory chain, using ubiquinone as an electron acceptor. Part of the enzyme membrane arm which is embedded in the lipid bilayer and involved in proton translocation. The sequence is that of NADH-ubiquinone oxidoreductase chain 4L (MT-ND4L) from Capra hircus (Goat).